The primary structure comprises 386 residues: O-methyltransferase aunE (386 aa).

S-adenosyl-L-methionine is bound at residue Trp200. His299 serves as the catalytic Proton acceptor.

The protein belongs to the class I-like SAM-binding methyltransferase superfamily. Cation-independent O-methyltransferase family.

The protein operates within secondary metabolite biosynthesis. Its function is as follows. O-methyltransferase; part of the gene cluster that mediates the biosynthesis of aurasperone B, a dimeric gamma-naphthopyrone. The first step in the biosynthesis of aurasperone B is the production of gamma-naphthopyrone precursor YWA1 by the non-reducing polyketide synthase albA, via condensation of one acetyl-CoA starter unit with 6 malonyl-CoA units. YWA1 is then methylated by aunE at position C-6 to yield foncesin which is further methylated at position C-8 by aunD to produce fonsecin B. A key enzyme in the biosynthetic pathway is the cytochrome P450 monooxygenase aunB which catalyzes the oxidative dimerization of fonsecin B to aurasperone B. AunB also catalyzes the oxidative dimerization of rubrofusarin B into aurasperone A. In Aspergillus niger (strain ATCC MYA-4892 / CBS 513.88 / FGSC A1513), this protein is O-methyltransferase aunE.